The following is a 230-amino-acid chain: Ribonuclease 3 (230 aa).

Residues 1–134 (MKQLEELLST…FLGALLLDKG (134 aa)) enclose the RNase III domain. Glu47 provides a ligand contact to Mg(2+). The active site involves Asp51. Asp120 and Glu123 together coordinate Mg(2+). Glu123 is an active-site residue. In terms of domain architecture, DRBM spans 160–229 (DYKTCLQEFL…AKNALAQLSE (70 aa)).

This sequence belongs to the ribonuclease III family. Homodimer. It depends on Mg(2+) as a cofactor.

It is found in the cytoplasm. It catalyses the reaction Endonucleolytic cleavage to 5'-phosphomonoester.. Its function is as follows. Digests double-stranded RNA. Involved in the processing of primary rRNA transcript to yield the immediate precursors to the large and small rRNAs (23S and 16S). Processes some mRNAs, and tRNAs when they are encoded in the rRNA operon. Processes pre-crRNA and tracrRNA of type II CRISPR loci if present in the organism. The sequence is that of Ribonuclease 3 from Streptococcus pyogenes serotype M2 (strain MGAS10270).